A 382-amino-acid polypeptide reads, in one-letter code: Mannitol-1-phosphate 5-dehydrogenase (382 aa).

3-14 (ALHFGAGNIGRG) lines the NAD(+) pocket. K269 carries the N6-acetyllysine modification.

The protein belongs to the mannitol dehydrogenase family.

It carries out the reaction D-mannitol 1-phosphate + NAD(+) = beta-D-fructose 6-phosphate + NADH + H(+). The protein is Mannitol-1-phosphate 5-dehydrogenase of Escherichia coli O127:H6 (strain E2348/69 / EPEC).